Consider the following 259-residue polypeptide: UPF0014 membrane protein slr1647 (259 aa).

Helical transmembrane passes span 4-24 (ALIELDWADIGWMLGLLGAAI), 34-54 (LTGQLLWAGGRTILQLIVVGY), 55-75 (FLAVVFSLDNPWAVLLVLAIM), 98-118 (LWLSLGASTAISLGYALVVII), 128-148 (YLIPLTGMILGQTMNSASLAG), 195-215 (MMVVGLVSLPGMLTGQVLAGG), and 225-245 (ILIMFLILLTNTLSTIAVTAT).

It belongs to the UPF0014 family.

The protein resides in the cell membrane. This chain is UPF0014 membrane protein slr1647, found in Synechocystis sp. (strain ATCC 27184 / PCC 6803 / Kazusa).